The primary structure comprises 504 residues: GTPase Obg (504 aa).

An Obg domain is found at 2-159; sequence SQFVDRVVLH…KDVTLELKSM (158 aa). A disordered region spans residues 68–88; the sequence is AERGNNGAGDDRHGARGKDLT. In terms of domain architecture, OBG-type G spans 160–340; sequence ADVGLVGFPS…LRFALMDIVR (181 aa). GTP is bound by residues 166-173, 191-195, 212-215, 292-295, and 321-323; these read GFPSAGKS, FTTLA, DVPG, NKMD, and STV. Mg(2+)-binding residues include Ser173 and Thr193. One can recognise an OCT domain in the interval 364–444; sequence KRKGRFADFE…IGGITFEWDP (81 aa). Residues 449–481 are disordered; that stretch reads GVDQTPAYGRGKDRRLEQTDRVTAEQRKRASQA. Residues 458–476 are compositionally biased toward basic and acidic residues; it reads RGKDRRLEQTDRVTAEQRK.

The protein belongs to the TRAFAC class OBG-HflX-like GTPase superfamily. OBG GTPase family. In terms of assembly, monomer. The cofactor is Mg(2+).

It localises to the cytoplasm. Its function is as follows. An essential GTPase which binds GTP, GDP and possibly (p)ppGpp with moderate affinity, with high nucleotide exchange rates and a fairly low GTP hydrolysis rate. Plays a role in control of the cell cycle, stress response, ribosome biogenesis and in those bacteria that undergo differentiation, in morphogenesis control. In Corynebacterium urealyticum (strain ATCC 43042 / DSM 7109), this protein is GTPase Obg.